The chain runs to 423 residues: Histidine--tRNA ligase (423 aa).

It belongs to the class-II aminoacyl-tRNA synthetase family. In terms of assembly, homodimer.

It localises to the cytoplasm. It carries out the reaction tRNA(His) + L-histidine + ATP = L-histidyl-tRNA(His) + AMP + diphosphate + H(+). The sequence is that of Histidine--tRNA ligase from Haemophilus ducreyi (strain 35000HP / ATCC 700724).